Consider the following 763-residue polypeptide: Formin-like protein 4 (763 aa).

The first 33 residues, 1 to 33 (MAAMLMQPWPPFLPHLTLVFLTLILFFPNQSFS), serve as a signal peptide directing secretion. Positions 52–73 (PPVQSPVLSPPQNPSSSSSDSD) are disordered. A helical membrane pass occupies residues 80–100 (AVLITAASTLLVAAVFFFLVH). 2 disordered regions span residues 185–327 (IYSK…DSDH) and 726–763 (RSSM…DSDM). A compositionally biased stretch (polar residues) spans 205 to 225 (RSSTSHSVIHNDNYRNATTTH). The segment covering 229-238 (VKTDSFEFVK) has biased composition (basic and acidic residues). A compositionally biased stretch (pro residues) spans 240–280 (DPTPPPPPPPPIPVKQSATPPPPPPPKLKNNGPSPPPPPPL). Residues 281 to 292 (KKTAALSSSASK) are compositionally biased toward low complexity. The region spanning 303-738 (SGESSNGQVK…MGSTQQRNAV (436 aa)) is the FH2 domain. A compositionally biased stretch (basic and acidic residues) spans 316–327 (LHWDKVNPDSDH). The segment covering 726–736 (RSSMGSTQQRN) has biased composition (polar residues).

This sequence belongs to the formin-like family. Class-I subfamily. In terms of assembly, interacts with profilin. Expressed in the whole plant (at protein level).

Its subcellular location is the cell membrane. Functionally, might be involved in the organization and polarity of the actin cytoskeleton. The protein is Formin-like protein 4 (FH4) of Arabidopsis thaliana (Mouse-ear cress).